Reading from the N-terminus, the 155-residue chain is Transcriptional repressor NrdR (155 aa).

A zinc finger lies at 3 to 34; the sequence is CPFCSHFESKVVDSRPTDEGQAIRRRRECVSC. Residues 49–139 enclose the ATP-cone domain; sequence LIVVKKSGNR…VYREFKDINT (91 aa).

This sequence belongs to the NrdR family. Zn(2+) is required as a cofactor.

Its function is as follows. Negatively regulates transcription of bacterial ribonucleotide reductase nrd genes and operons by binding to NrdR-boxes. This chain is Transcriptional repressor NrdR, found in Alkaliphilus metalliredigens (strain QYMF).